The chain runs to 90 residues: Small ribosomal subunit protein bS20 (90 aa).

The protein belongs to the bacterial ribosomal protein bS20 family.

Its function is as follows. Binds directly to 16S ribosomal RNA. The polypeptide is Small ribosomal subunit protein bS20 (Rickettsia canadensis (strain McKiel)).